We begin with the raw amino-acid sequence, 485 residues long: Aspartyl/glutamyl-tRNA(Asn/Gln) amidotransferase subunit B (485 aa).

This sequence belongs to the GatB/GatE family. GatB subfamily. Heterotrimer of A, B and C subunits.

The enzyme catalyses L-glutamyl-tRNA(Gln) + L-glutamine + ATP + H2O = L-glutaminyl-tRNA(Gln) + L-glutamate + ADP + phosphate + H(+). It catalyses the reaction L-aspartyl-tRNA(Asn) + L-glutamine + ATP + H2O = L-asparaginyl-tRNA(Asn) + L-glutamate + ADP + phosphate + 2 H(+). In terms of biological role, allows the formation of correctly charged Asn-tRNA(Asn) or Gln-tRNA(Gln) through the transamidation of misacylated Asp-tRNA(Asn) or Glu-tRNA(Gln) in organisms which lack either or both of asparaginyl-tRNA or glutaminyl-tRNA synthetases. The reaction takes place in the presence of glutamine and ATP through an activated phospho-Asp-tRNA(Asn) or phospho-Glu-tRNA(Gln). The protein is Aspartyl/glutamyl-tRNA(Asn/Gln) amidotransferase subunit B of Paramagnetospirillum magneticum (strain ATCC 700264 / AMB-1) (Magnetospirillum magneticum).